Reading from the N-terminus, the 488-residue chain is Microtubule-destabilizing protein 60 (488 aa).

Positions 25 to 56 (AQEVSRFSENSNPNFVSHSTPLEKSSKSSAQK) are enriched in polar residues. Disordered stretches follow at residues 25 to 71 (AQEV…VFSP), 262 to 304 (HASV…TKKQ), and 436 to 457 (DRPF…PKFN). The span at 264–280 (SVSSSWDNSVSSLNSNG) shows a compositional bias: low complexity.

Belongs to the TPX2 family.

The protein localises to the cytoplasm. It localises to the cytoskeleton. Its function is as follows. Binds directly to microtubules. Microtubule-destabilizing protein involved in the PIF3-dependent positive regulation of hypocotyl cell elongation via the modulation of cortical microtubules dynamic in response to light and ethylene signaling. Promotes submergence-induced and ethylene-dependent underwater hypocotyl elongation. The sequence is that of Microtubule-destabilizing protein 60 from Arabidopsis thaliana (Mouse-ear cress).